A 493-amino-acid polypeptide reads, in one-letter code: MLLFEQPVDLEKNNEDDTNIKPFAISRHFLLKLLLCGIILIELLLYSKCPKPIDNGPRTIANRSNTYFNGTHDFKTLTILISIDGFHPRLIDAKYTPFLYNLHNLRSPYDMNITTAPYMIPSFPTQTFPNHWSMVTGKYPIEHGIVSNIFWDNFTSSEFRPNNLDARIWSNTADPIWQLLQTESQGEYKVATHMWPGSEVVYEDHGDVPRERMPFYFGKFNQWEKLQDKLAQIFRYIDMPQLKDRPELVISYIPNVDSYGHSFGYDLRDKRLQKLIGEVDGFFLDLIEGLQKRNLLKISNVMIVSDHGMSNVNANDGEHVVVWERVFPADAMSAFISHLYNEGPMMMVCLKNPRDKQWICDLIEAQLEKAYGDEISRKFHVILKEDFDPSWKYFQYDNRKHRYDDRVGDIWILADEYYAIVKEMGDVPIGIMGTHGYNFNNCSDMASIFIGMGPMFNNEVVPPFENIEVYNMLIKASALLGEEKTKKEKSLLQ.

At 1–28 (MLLFEQPVDLEKNNEDDTNIKPFAISRH) the chain is on the cytoplasmic side. A helical; Signal-anchor for type II membrane protein transmembrane segment spans residues 29-45 (FLLKLLLCGIILIELLL). Residues 46–493 (YSKCPKPIDN…KTKKEKSLLQ (448 aa)) are Extracellular-facing. Asparagine 62, asparagine 69, and asparagine 112 each carry an N-linked (GlcNAc...) asparagine glycan. A phosphodiesterase region spans residues 76–438 (TLTILISIDG…IGIMGTHGYN (363 aa)). The Nucleophile role is filled by threonine 127. Asparagine 153 and asparagine 441 each carry an N-linked (GlcNAc...) asparagine glycan.

Belongs to the nucleotide pyrophosphatase/phosphodiesterase family. In terms of processing, autophosphorylated as part of the catalytic cycle of phosphodiesterase/pyrophosphatase activity.

The protein resides in the membrane. The catalysed reaction is Hydrolytically removes 5'-nucleotides successively from the 3'-hydroxy termini of 3'-hydroxy-terminated oligonucleotides.. The enzyme catalyses a ribonucleoside 5'-triphosphate + H2O = a ribonucleoside 5'-phosphate + diphosphate + H(+). It carries out the reaction a 2'-deoxyribonucleoside 5'-triphosphate + H2O = a 2'-deoxyribonucleoside 5'-phosphate + diphosphate + H(+). Mediates extracellular nucleotide derived phosphate hydrolysis along with NPP1 and PHO5. This Saccharomyces cerevisiae (strain ATCC 204508 / S288c) (Baker's yeast) protein is Ectonucleotide pyrophosphatase/phosphodiesterase 2 (NPP2).